The primary structure comprises 782 residues: Acetazolamide conferring resistance protein zam (782 aa).

Positions 270–579 (EVALSLESQA…QRLLKLVLTE (310 aa)) constitute an RNB domain. Residues 655–736 (GEIFRGLITG…YRQQIDLGAV (82 aa)) form the S1 motif domain. The tract at residues 737–782 (NNAPKDSANMDFDDDDEDGDEREEQDTMDWDAMEDGDDDEGGAVIF) is disordered. Residues 747–782 (DFDDDDEDGDEREEQDTMDWDAMEDGDDDEGGAVIF) are compositionally biased toward acidic residues.

Belongs to the RNR ribonuclease family.

In terms of biological role, not known; control resistance to the carbonic anhydrase inhibitor acetazolamide. The sequence is that of Acetazolamide conferring resistance protein zam (zam) from Synechocystis sp. (strain ATCC 27184 / PCC 6803 / Kazusa).